Reading from the N-terminus, the 383-residue chain is 2-methylcitrate synthase 2 (383 aa).

Substrate contacts are provided by R73 and H195. Residue H230 is part of the active site. CoA is bound at residue 263–267 (VVMGF). The active site involves H269. Substrate is bound at residue R278. The active site involves D320. R345 and R364 together coordinate substrate.

The protein belongs to the citrate synthase family. As to quaternary structure, homodimer.

The catalysed reaction is propanoyl-CoA + oxaloacetate + H2O = (2S,3S)-2-methylcitrate + CoA + H(+). The enzyme catalyses oxaloacetate + acetyl-CoA + H2O = citrate + CoA + H(+). It functions in the pathway organic acid metabolism; propanoate degradation. The protein operates within carbohydrate metabolism; tricarboxylic acid cycle; isocitrate from oxaloacetate: step 1/2. Functionally, involved in the catabolism of short chain fatty acids (SCFA) via the tricarboxylic acid (TCA)(acetyl degradation route) and via the 2-methylcitrate cycle I (propionate degradation route). Catalyzes the Claisen condensation of propionyl-CoA and oxaloacetate (OAA) to yield 2-methylcitrate (2-MC) and CoA. Also catalyzes the condensation of oxaloacetate with acetyl-CoA but with a lower specificity. This Corynebacterium glutamicum (strain ATCC 13032 / DSM 20300 / JCM 1318 / BCRC 11384 / CCUG 27702 / LMG 3730 / NBRC 12168 / NCIMB 10025 / NRRL B-2784 / 534) protein is 2-methylcitrate synthase 2 (prpC2).